Reading from the N-terminus, the 212-residue chain is Pyridoxine/pyridoxamine 5'-phosphate oxidase (212 aa).

Residues 8–11 (RTNY) and Lys66 contribute to the substrate site. Residues 61 to 66 (RIVLLK), 76 to 77 (FT), Lys83, and Gln105 contribute to the FMN site. Substrate contacts are provided by Tyr123, Arg127, and Ser131. Residues 140 to 141 (QS) and Trp185 each bind FMN. Residue 191 to 193 (RLH) participates in substrate binding. Arg195 contributes to the FMN binding site.

The protein belongs to the pyridoxamine 5'-phosphate oxidase family. As to quaternary structure, homodimer. FMN is required as a cofactor.

It carries out the reaction pyridoxamine 5'-phosphate + O2 + H2O = pyridoxal 5'-phosphate + H2O2 + NH4(+). The catalysed reaction is pyridoxine 5'-phosphate + O2 = pyridoxal 5'-phosphate + H2O2. It functions in the pathway cofactor metabolism; pyridoxal 5'-phosphate salvage; pyridoxal 5'-phosphate from pyridoxamine 5'-phosphate: step 1/1. Its pathway is cofactor metabolism; pyridoxal 5'-phosphate salvage; pyridoxal 5'-phosphate from pyridoxine 5'-phosphate: step 1/1. Its function is as follows. Catalyzes the oxidation of either pyridoxine 5'-phosphate (PNP) or pyridoxamine 5'-phosphate (PMP) into pyridoxal 5'-phosphate (PLP). This Leptospira biflexa serovar Patoc (strain Patoc 1 / Ames) protein is Pyridoxine/pyridoxamine 5'-phosphate oxidase.